Reading from the N-terminus, the 323-residue chain is Movement protein (323 aa).

A coiled-coil region spans residues 292–322 (SLLENKDENLLRSMSTKIDTLGKKLSLIYDN).

The protein belongs to the caulimoviridae movement protein family. As to quaternary structure, homotrimer, through the coiled-coil domain. Interacts with VAP.

It localises to the host cell junction. The protein localises to the host plasmodesma. In terms of biological role, transports viral genome to neighboring plant cells directly through plasmosdesmata, without any budding. The movement protein allows efficient cell to cell propagation, by bypassing the host cell wall barrier. Acts by forming tubules structures that increase the size exclusion limit (SEL) of plasmodesmata, thereby allowing viral ribonucleocapsids to spread directly to neighboring cells. This Figwort mosaic virus (strain DxS) (FMV) protein is Movement protein.